Consider the following 819-residue polypeptide: Leucine--tRNA ligase (819 aa).

Residues 42–52 (PYPSGRLHMGH) carry the 'HIGH' region motif. Residues 576 to 580 (KMSKS) carry the 'KMSKS' region motif. Lysine 579 contacts ATP.

This sequence belongs to the class-I aminoacyl-tRNA synthetase family.

Its subcellular location is the cytoplasm. The enzyme catalyses tRNA(Leu) + L-leucine + ATP = L-leucyl-tRNA(Leu) + AMP + diphosphate. The sequence is that of Leucine--tRNA ligase from Nitrosococcus oceani (strain ATCC 19707 / BCRC 17464 / JCM 30415 / NCIMB 11848 / C-107).